An 810-amino-acid chain; its full sequence is Interleukin-4 receptor subunit alpha (810 aa).

The signal sequence occupies residues 1-25 (MGRLCTKFLTSVGCLILLLVTGSGS). The Extracellular portion of the chain corresponds to 26 to 233 (IKVLGEPTCF…NHFQLPLIQR (208 aa)). Cys34 and Cys44 are oxidised to a cystine. The N-linked (GlcNAc...) asparagine glycan is linked to Asn72. Cys75 and Cys87 form a disulfide bridge. The Fibronectin type-III domain occupies 126–224 (APDNLTLHTN…EWSPSITWYN (99 aa)). N-linked (GlcNAc...) asparagine glycosylation is found at Asn129, Asn135, and Asn163. Residue Ser165 is modified to Phosphoserine. The short motif at 213 to 217 (WSEWS) is the WSXWS motif element. Residues 234-257 (LPLGVTISCLCIPLFCLFCYFSIT) traverse the membrane as a helical segment. Residues 258-810 (KIKKIWWDQI…PVGALGIAVS (553 aa)) are Cytoplasmic-facing. A Box 1 motif motif is present at residues 263-271 (WWDQIPTPA). The tract at residues 441–557 (GSGQASVSWA…ESWEQILHMS (117 aa)) is required for IRS1 activation and IL4-induced cell growth. A disordered region spans residues 460-482 (ATCQVTEQPSHPGPLSGSPAQSA). The residue at position 500 (Tyr500) is a Phosphotyrosine. The segment at 510–546 (APNPGELAPEQQQADHLEEEEPPSPADPHSSGPPMQP) is disordered. A required for IL4-induced gene expression region spans residues 557 to 653 (SVLQHGAAAG…SSVPLFTFGL (97 aa)). A phosphotyrosine mark is found at Tyr575, Tyr603, and Tyr631. Residues 586-672 (AAQDPGVPGV…NSDPPKSPPE (87 aa)) are disordered. Over residues 635–647 (QNPVPNQSPSSVP) the composition is skewed to low complexity. Residues 707 to 712 (IVYSSL) carry the ITIM motif motif. The disordered stretch occupies residues 766-810 (PPEANLMSAPKTPSNLSGEGKGPGHSPVPSQTTEVPVGALGIAVS).

The protein belongs to the type I cytokine receptor family. Type 4 subfamily. In terms of assembly, the functional IL4 receptor is formed by initial binding of IL4 to IL4R. Subsequent recruitment to the complex of the common gamma chain, in immune cells, creates a type I receptor and, in non-immune cells, of IL13RA1 forms a type II receptor. IL4R can also interact with the IL13/IL13RA1 complex to form a similar type II receptor. Interacts with the SH2-containing phosphatases, PTPN6/SHIP1, PTPN11/SHIP2 and INPP5D/SHIP. Interacts with JAK3. Interacts with PIK3C3. Interacts with JAK1 through a Box 1-containing region; inhibited by SOCS5. Interacts with SOCS5; inhibits IL4 signaling. Interacts with CLM1. Interacts with IL13RA2. On IL4 binding, phosphorylated on C-terminal tyrosine residues. In terms of processing, soluble IL4R can also be produced by proteolytic cleavage at the cell surface (shedding). In terms of tissue distribution, expressed in both Th1 and Th2 cells.

The protein resides in the cell membrane. The protein localises to the secreted. In terms of biological role, receptor for both interleukin 4 and interleukin 13. Couples to the JAK1/2/3-STAT6 pathway. The IL4 response is involved in promoting Th2 differentiation. The IL4/IL13 responses are involved in regulating IgE production and, chemokine and mucus production at sites of allergic inflammation. In certain cell types, can signal through activation of insulin receptor substrates, IRS1/IRS2. This Mus musculus (Mouse) protein is Interleukin-4 receptor subunit alpha (Il4r).